Consider the following 197-residue polypeptide: Proteasome subunit beta 1 (197 aa).

Residues 1-6 constitute a propeptide, removed in mature form; by autocatalysis; the sequence is MNRKTG. The active-site Nucleophile is the Thr7.

It belongs to the peptidase T1B family. As to quaternary structure, the 20S proteasome core is composed of 14 alpha and 14 beta subunits that assemble into four stacked heptameric rings, resulting in a barrel-shaped structure. The two inner rings, each composed of seven catalytic beta subunits, are sandwiched by two outer rings, each composed of seven alpha subunits. The catalytic chamber with the active sites is on the inside of the barrel. Has a gated structure, the ends of the cylinder being occluded by the N-termini of the alpha-subunits. Is capped at one or both ends by the proteasome regulatory ATPase, PAN.

The protein localises to the cytoplasm. The enzyme catalyses Cleavage of peptide bonds with very broad specificity.. The formation of the proteasomal ATPase PAN-20S proteasome complex, via the docking of the C-termini of PAN into the intersubunit pockets in the alpha-rings, triggers opening of the gate for substrate entry. Interconversion between the open-gate and close-gate conformations leads to a dynamic regulation of the 20S proteasome proteolysis activity. Its function is as follows. Component of the proteasome core, a large protease complex with broad specificity involved in protein degradation. This chain is Proteasome subunit beta 1, found in Pyrococcus abyssi (strain GE5 / Orsay).